We begin with the raw amino-acid sequence, 427 residues long: MKLKTNIRHLHGSIRVPGDKSISHRSIIFGSLAEGETKVYDILRGEDVLSTMQVFRDLGVEIEDKDGVITIQGVGMAGLKAPQNALNMGNSGTSIRLISGVLAGADFEVEMFGDDSLSKRPMDRVTLPLKKMGVSISGQTERDLPPLRLKGTKNLRPIHYELPIASAQVKSALMFAALQAKGESVIIEKECTRNHTEDMLKQFGGHLSVDGKKITVQGPQKLTGQKVVVPGDISSAAFWLVAGLIVPNSRLVLQNVGINETRTGIIDVIRAMGGKLEITEIDPVAKSSTLTVESSDLKGTEIGGALIPRLIDELPIIALLATQAQGVTVIKDAEELKVKETDRIQVVADALNSMGADITPTADGMIIKGKSALHGARVNTFGDHRIGMMTAIAALLVADGEVELDRAEAINTSYPSFFDDLESLIHG.

The 3-phosphoshikimate site is built by lysine 20, serine 21, and arginine 25. Residue lysine 20 coordinates phosphoenolpyruvate. Positions 92 and 120 each coordinate phosphoenolpyruvate. Serine 166, glutamine 168, aspartate 312, and lysine 339 together coordinate 3-phosphoshikimate. Glutamine 168 lines the phosphoenolpyruvate pocket. Catalysis depends on aspartate 312, which acts as the Proton acceptor. Residues arginine 343 and arginine 385 each coordinate phosphoenolpyruvate.

It belongs to the EPSP synthase family. Monomer.

It localises to the cytoplasm. It carries out the reaction 3-phosphoshikimate + phosphoenolpyruvate = 5-O-(1-carboxyvinyl)-3-phosphoshikimate + phosphate. It functions in the pathway metabolic intermediate biosynthesis; chorismate biosynthesis; chorismate from D-erythrose 4-phosphate and phosphoenolpyruvate: step 6/7. In terms of biological role, catalyzes the transfer of the enolpyruvyl moiety of phosphoenolpyruvate (PEP) to the 5-hydroxyl of shikimate-3-phosphate (S3P) to produce enolpyruvyl shikimate-3-phosphate and inorganic phosphate. The polypeptide is 3-phosphoshikimate 1-carboxyvinyltransferase (Streptococcus pneumoniae (strain 70585)).